A 410-amino-acid chain; its full sequence is Magnesium transporter NIPA3 (410 aa).

At 1–67 (MGAQVRLPPG…ISANVENKYS (67 aa)) the chain is on the extracellular side. N-linked (GlcNAc...) asparagine glycosylation is found at Asn-25, Asn-35, Asn-50, and Asn-55. The helical transmembrane segment at 68 to 88 (LYVGLVLAVSSSIFIGSSFIL) threads the bilayer. At 89–114 (KKKGLLQLASKGFTRAGQGGHSYLKE) the chain is on the cytoplasmic side. Residues 115-135 (WLWWVGLLSMGAGEAANFAAY) form a helical membrane-spanning segment. A topological domain (extracellular) is located at residue Ala-136. The helical transmembrane segment at 137 to 157 (FAPATLVTPLGALSVLISAIL) threads the bilayer. Residues 158–165 (SSYFLNEH) are Cytoplasmic-facing. A helical transmembrane segment spans residues 166 to 186 (LNIHGKIGCILSILGSTVMVI). Residues 187 to 207 (HAPQEEEVTSLHEMEMKLRDP) lie on the Extracellular side of the membrane. Residues 208-228 (GFISFAVIITVISLVLILIVA) form a helical membrane-spanning segment. Topologically, residues 229 to 233 (PKKGQ) are cytoplasmic. Residues 234-254 (TNILVYISICSLIGAFSVSSV) form a helical membrane-spanning segment. At 255–273 (KGLGIAIKELIEWKPVYKH) the chain is on the extracellular side. A helical membrane pass occupies residues 274–294 (PLVFVLLAVLVLSVTTQINYL). Residues 295-305 (NKALDTFNTSL) are Cytoplasmic-facing. Residues 306–326 (VTPIYYVFFTSMVVTCSAILF) form a helical membrane-spanning segment. Over 327–336 (QEWYGMTAGD) the chain is Extracellular. The helical transmembrane segment at 337–357 (IIGTLSGFFTIIIGIFLLHAF) threads the bilayer. The Cytoplasmic portion of the chain corresponds to 358-410 (KNTDITWSELTSTAKKEAVSLNVNENNYVLLENLECSAPGYNDDVTLFSRTDD).

This sequence belongs to the NIPA family. As to expression, expressed in the pancreatic islets.

It localises to the golgi apparatus membrane. It catalyses the reaction Mg(2+)(in) = Mg(2+)(out). Acts as a Mg(2+) transporter. Can also transport other divalent cations such as Fe(2+), Sr(2+), Ba(2+), Mn(2+), Cu(2+) and Co(2+) but to a much less extent than Mg(2+). This chain is Magnesium transporter NIPA3 (NIPAL1), found in Homo sapiens (Human).